Reading from the N-terminus, the 296-residue chain is Homeobox protein SIX2 (296 aa).

Residues 124–183 constitute a DNA-binding region (homeobox); the sequence is GEETSYCFKEKSRSVLREWYAHNPYPSPREKRELAEATGLTTTQVSNWFKNRRQRDRAAE. The interval 168 to 284 is disordered; it reads VSNWFKNRRQ…HHHSLQDSIL (117 aa). A compositionally biased stretch (basic and acidic residues) spans 179-190; sequence DRAAEAKERENS. 2 stretches are compositionally biased toward low complexity: residues 191-206 and 228-237; these read ENSN…SSLN and HSSSSPALLL. Pro residues predominate over residues 254 to 264; that stretch reads PPGPSAVPVPV.

The protein belongs to the SIX/Sine oculis homeobox family. Interacts with TCF7L2; in a canonical Wnt signaling independent manner; prevents transcription of differentiation genes in cap mesenchyme. Interacts with OSR1; form a strong repressor complex with TCF7L2, TLE2 and TLE3 to prevent the activation of Wnt/beta-catenin target genes in the cap mesenchyme. Interacts with HOXA11, EYA1 and EYA3. As to expression, expressed in phalangeal tendons, in smooth muscle and in head and body mesenchyme.

It localises to the nucleus. Functionally, transcription factor that plays an important role in the development of several organs, including kidney, skull and stomach. During kidney development, maintains cap mesenchyme multipotent nephron progenitor cells in an undifferentiated state by opposing the inductive signals emanating from the ureteric bud and cooperates with WNT9B to promote renewing progenitor cells proliferation. Acts through its interaction with TCF7L2 and OSR1 in a canonical Wnt signaling independent manner preventing transcription of differentiation genes in cap mesenchyme such as WNT4. Also acts independently of OSR1 to activate expression of many cap mesenchyme genes, including itself, GDNF and OSR1. During craniofacial development plays a role in growth and elongation of the cranial base through regulation of chondrocyte differentiation. During stomach organogenesis, controls pyloric sphincter formation and mucosal growth through regulation of a gene network including NKX2-5, BMPR1B, BMP4, SOX9 and GREM1. During branchial arch development, acts to mediate HOXA2 control over the insulin-like growth factor pathway. May also be involved in limb tendon and ligament development. Plays a role in cell proliferation and migration. This chain is Homeobox protein SIX2 (Six2), found in Mus musculus (Mouse).